Here is a 213-residue protein sequence, read N- to C-terminus: Large ribosomal subunit protein uL3 (213 aa).

This sequence belongs to the universal ribosomal protein uL3 family. In terms of assembly, part of the 50S ribosomal subunit. Forms a cluster with proteins L14 and L19.

One of the primary rRNA binding proteins, it binds directly near the 3'-end of the 23S rRNA, where it nucleates assembly of the 50S subunit. This chain is Large ribosomal subunit protein uL3, found in Bifidobacterium longum subsp. infantis (strain ATCC 15697 / DSM 20088 / JCM 1222 / NCTC 11817 / S12).